The chain runs to 428 residues: GTPase Obg (428 aa).

One can recognise an Obg domain in the interval M1–L158. The OBG-type G domain occupies A159 to K333. Residues G165–S172, F190–V194, D212–G215, T282–D285, and S314–L316 each bind GTP. The Mg(2+) site is built by S172 and T192. The OCT domain occupies Y350–E428.

It belongs to the TRAFAC class OBG-HflX-like GTPase superfamily. OBG GTPase family. Monomer. It depends on Mg(2+) as a cofactor.

It is found in the cytoplasm. In terms of biological role, an essential GTPase which binds GTP, GDP and possibly (p)ppGpp with moderate affinity, with high nucleotide exchange rates and a fairly low GTP hydrolysis rate. Plays a role in control of the cell cycle, stress response, ribosome biogenesis and in those bacteria that undergo differentiation, in morphogenesis control. The sequence is that of GTPase Obg from Lacticaseibacillus casei (strain BL23) (Lactobacillus casei).